We begin with the raw amino-acid sequence, 79 residues long: Calcium/calmodulin-dependent protein kinase II inhibitor 2 (79 aa).

The interval 1 to 21 (MSEILPYGEDKMGRFGADPEG) is disordered. An inhibitory domain region spans residues 43–69 (KRPPKLGQIGRAKRVVIEDDRIDDVLK).

Belongs to the CAMK2N family. As to quaternary structure, interacts with CAMK2A and CAMK2B in the presence of Ca(2+)/calmodulin or after autophosphorylation.

Its subcellular location is the nucleus. It is found in the cytoplasm. It localises to the cytosol. The protein resides in the synapse. Its function is as follows. Potent and specific cellular inhibitor of CaM-kinase II (CAMK2). Traps Ca(2+)/calmodulin on CAMK2. The chain is Calcium/calmodulin-dependent protein kinase II inhibitor 2 (Camk2n2) from Mus musculus (Mouse).